An 821-amino-acid polypeptide reads, in one-letter code: Zinc finger protein 41 (821 aa).

A disordered region spans residues 1 to 55; it reads MAANGDSPPWSPALAAEGRGSSCEVRRERTPEARIHSVKRYPDLSPGPKGRSSAD. Residues 24–35 show a composition bias toward basic and acidic residues; sequence EVRRERTPEARI. The region spanning 69–140 is the KRAB domain; it reads VSFEDVTVDF…EGEAPHQSCS (72 aa). A Glycyl lysine isopeptide (Lys-Gly) (interchain with G-Cter in SUMO2) cross-link involves residue K120. The C2H2-type 1 zinc-finger motif lies at 313 to 335; sequence YVCTECVMGFTQKSHLFEHQRIH. The C2H2-type 2; degenerate zinc finger occupies 341–364; the sequence is RECDKSNKVFPQKPQVDVHPSVYT. 10 consecutive C2H2-type zinc fingers follow at residues 369-391, 397-419, 425-447, 453-475, 481-503, 509-531, 537-559, 565-587, 593-615, and 621-643; these read YLCT…QKIH, YKCS…LRIH, YECS…QKTH, YECN…QRIH, YVCA…QRIH, YECS…QRIH, YICT…QKTH, YMCA…QKTH, YKCN…QKSH, and YECK…QRIH. K647 is covalently cross-linked (Glycyl lysine isopeptide (Lys-Gly) (interchain with G-Cter in SUMO2)). 6 C2H2-type zinc fingers span residues 649–671, 677–699, 705–727, 733–755, 761–783, and 789–811; these read YVCP…HRIH, YECS…QKIH, NICA…QKIH, YECG…QKSH, YECS…QIIH, and YACT…QKMH.

Belongs to the krueppel C2H2-type zinc-finger protein family. In terms of tissue distribution, expressed in the heart, brain, placenta, lung, liver, skeletal muscle, kidney and pancreas.

Its subcellular location is the nucleus. May be involved in transcriptional regulation. This is Zinc finger protein 41 (ZNF41) from Homo sapiens (Human).